We begin with the raw amino-acid sequence, 440 residues long: Probable exopolygalacturonase C (440 aa).

The signal sequence occupies residues 1 to 21 (MLITNPALLGILASLVPLALG). N-linked (GlcNAc...) asparagine glycosylation is found at Asn-84 and Asn-151. 3 PbH1 repeats span residues 188–210 (GDDITVSHAIVDATSTGGFPFNT), 217–238 (GTNISITDSVMFNGDDAIAVNT), and 240–261 (SHNIVFARNTIGYQSHGMSIGS). An N-linked (GlcNAc...) asparagine glycan is attached at Asn-219. The Proton donor role is filled by Asp-231. His-255 is an active-site residue. The N-linked (GlcNAc...) asparagine glycan is linked to Asn-271. Residues 272-293 (ITNLRFEDVTVIDALYAARFKS) form a PbH1 4 repeat. Asn-313 carries N-linked (GlcNAc...) asparagine glycosylation. Cys-389 and Cys-395 are oxidised to a cystine. Residue Asn-434 is glycosylated (N-linked (GlcNAc...) asparagine).

Belongs to the glycosyl hydrolase 28 family.

It is found in the secreted. It carries out the reaction [(1-&gt;4)-alpha-D-galacturonosyl](n) + H2O = alpha-D-galacturonate + [(1-&gt;4)-alpha-D-galacturonosyl](n-1). In terms of biological role, specific in hydrolyzing the terminal glycosidic bond of polygalacturonic acid and oligogalacturonates. The chain is Probable exopolygalacturonase C (pgxC) from Aspergillus fumigatus (strain ATCC MYA-4609 / CBS 101355 / FGSC A1100 / Af293) (Neosartorya fumigata).